We begin with the raw amino-acid sequence, 292 residues long: MVAFVWLPRNGVSWTVVLPLKNLTRAKTRLDRPDRSRLALAMALDTVMAVLESETDLVGAVMIVTNDRTADHALSTLLNSHYIGADQPNLSPAARSARLVVIPDEPDRGLNPALVHGAALASARWPTRAVAALSADLPALRPPELHQALSEASQHRRAVLADATGTGTVLLTASAGATLQPAFGPHSHATHRRSGAVDLTGTLGGSVPGLRRDVDTLADLAQARDLGVGRATRAALTAGYHSPLVAEDSGGSGGESGTSAESGLSVPPGIVGGTQRRIVSDASGPGRAKKYP.

The phosphoenolpyruvate site is built by Thr168, Gly184, and Ser187. The interval 243–292 is disordered; that stretch reads PLVAEDSGGSGGESGTSAESGLSVPPGIVGGTQRRIVSDASGPGRAKKYP.

The protein belongs to the CofC family.

The catalysed reaction is phosphoenolpyruvate + GTP + H(+) = enolpyruvoyl-2-diphospho-5'-guanosine + diphosphate. Its pathway is cofactor biosynthesis; coenzyme F420 biosynthesis. In terms of biological role, guanylyltransferase that catalyzes the activation of phosphoenolpyruvate (PEP) as enolpyruvoyl-2-diphospho-5'-guanosine, via the condensation of PEP with GTP. It is involved in the biosynthesis of coenzyme F420, a hydride carrier cofactor. In Frankia casuarinae (strain DSM 45818 / CECT 9043 / HFP020203 / CcI3), this protein is Phosphoenolpyruvate guanylyltransferase.